The following is a 344-amino-acid chain: MAKVLYEKDIQDGVLKNKKIAVIGYGSQGHAHAMNLRDSGYDVVVGLRPGKSQEKAEEDGFNVLSVAEASSQADVVMVLLPDEMQPKVYEESIKDNLEQGNALVFAHGFNIHFTQVVPPANVDVFLVAPKGPGHLVRRTFEEGAGVPALYGVHQDYTGEAKDVALAYSKGIGAARAGVLETSFQEETETDLFGEQAVLCGGVTSLIKAGFETLTDAGYQPEVAYFECLHEMKLIVDLLYEGGLENMRYSISDTAQWGDFVSGQRVVDDQTKERMKSILDDIQTGSFAKGWILENQAGRPQFNAINRRENRHPIETVGRELRELMPFVKQPINAKKKDVNVHVPN.

The KARI N-terminal Rossmann domain maps to 2 to 181 (AKVLYEKDIQ…GAARAGVLET (180 aa)). Residues 25–28 (YGSQ), Arg48, Ser52, and 82–85 (DEMQ) each bind NADP(+). The active site involves His107. Gly133 contributes to the NADP(+) binding site. In terms of domain architecture, KARI C-terminal knotted spans 182–327 (SFQEETETDL…RELRELMPFV (146 aa)). Mg(2+) contacts are provided by Asp190, Glu194, Glu226, and Glu230. Residue Ser251 participates in substrate binding.

It belongs to the ketol-acid reductoisomerase family. It depends on Mg(2+) as a cofactor.

It catalyses the reaction (2R)-2,3-dihydroxy-3-methylbutanoate + NADP(+) = (2S)-2-acetolactate + NADPH + H(+). The enzyme catalyses (2R,3R)-2,3-dihydroxy-3-methylpentanoate + NADP(+) = (S)-2-ethyl-2-hydroxy-3-oxobutanoate + NADPH + H(+). It functions in the pathway amino-acid biosynthesis; L-isoleucine biosynthesis; L-isoleucine from 2-oxobutanoate: step 2/4. The protein operates within amino-acid biosynthesis; L-valine biosynthesis; L-valine from pyruvate: step 2/4. In terms of biological role, involved in the biosynthesis of branched-chain amino acids (BCAA). Catalyzes an alkyl-migration followed by a ketol-acid reduction of (S)-2-acetolactate (S2AL) to yield (R)-2,3-dihydroxy-isovalerate. In the isomerase reaction, S2AL is rearranged via a Mg-dependent methyl migration to produce 3-hydroxy-3-methyl-2-ketobutyrate (HMKB). In the reductase reaction, this 2-ketoacid undergoes a metal-dependent reduction by NADPH to yield (R)-2,3-dihydroxy-isovalerate. In Oceanobacillus iheyensis (strain DSM 14371 / CIP 107618 / JCM 11309 / KCTC 3954 / HTE831), this protein is Ketol-acid reductoisomerase (NADP(+)).